A 328-amino-acid chain; its full sequence is MLEDYYPSTTSYYHGGIDDDLYTAKWGMVMTFLDLNDSSLTPFEGTHFALIGFKSDKGVYINNGRVGAVESPAAIRTQLAKFPWHLGNQVMVYDVGNIDGPNRSLEQLQNSLSKAIKRMCDLNLKPIVLGGGHETAYGHYLGLRQSLSPSDDLAVINMDAHFDLRPYDQTGPNSGTGFRQMFDDAVADKRLFKYFVLGIQEHNNNLFLFDFVAKSKGIQFLTGQDIYQMGHQKVCRAIDRFLEGQERVYLTIDMDCFSVGAAPGVSAIQSLGVDPNLAVLVLQHIAASRKLVGFDVVEVSPPHDIDNHTANLAATFIFYLVQIMAQHS.

Mn(2+) is bound by residues H133, D159, H161, D163, D253, and D255.

The protein belongs to the arginase family. Mn(2+) serves as cofactor.

The enzyme catalyses N-formimidoyl-L-glutamate + H2O = formamide + L-glutamate. The protein operates within amino-acid degradation; L-histidine degradation into L-glutamate; L-glutamate from N-formimidoyl-L-glutamate (hydrolase route): step 1/1. In terms of biological role, catalyzes the conversion of N-formimidoyl-L-glutamate to L-glutamate and formamide. This Streptococcus pyogenes serotype M18 (strain MGAS8232) protein is Formimidoylglutamase.